A 305-amino-acid chain; its full sequence is Ankyrin repeat domain-containing protein 23 (305 aa).

Positions 41–72 (QEAVAREKLKLEEEKKKKLERFNSTRFNLDNL) form a coiled coil. The span at 83-92 (KKRLRHRVPP) shows a compositional bias: basic residues. The interval 83-104 (KKRLRHRVPPRKPEPLVKPQSQ) is disordered. ANK repeat units follow at residues 143 to 172 (LHRT…TVDA), 176 to 205 (LDRT…RVNA), 209 to 238 (IGST…HLNA), and 242 to 271 (EGDT…ELGV). The interval 178–195 (RTPVFWACRGGHLVILKQ) is interaction with TTN.

As to quaternary structure, interacts with titin/TTN and MYPN. In terms of tissue distribution, mainly expressed in heart, skeletal muscle and brown adipose tissues.

It is found in the nucleus. Its function is as follows. May be involved in the energy metabolism. Could be a molecular link between myofibrillar stretch-induced signaling pathways and muscle gene expression. The sequence is that of Ankyrin repeat domain-containing protein 23 (ANKRD23) from Homo sapiens (Human).